The chain runs to 140 residues: Sex-regulated protein janus-B (140 aa).

Arg42 is a binding site for substrate. The Proton acceptor role is filled by His69. Substrate is bound at residue 110–112 (SRT).

This sequence belongs to the janus family.

Functionally, janA and janB regulate somatic sex differentiation. The protein is Sex-regulated protein janus-B (janB) of Drosophila sechellia (Fruit fly).